The chain runs to 332 residues: 3-ketodihydrosphingosine reductase (332 aa).

The first 25 residues, 1-25, serve as a signal peptide directing secretion; that stretch reads MLLLAAAGLVAFVLLLYMVSPLISP. The Cytoplasmic segment spans residues 26 to 270; the sequence is KPLALPGAHV…GNFNSSIGSD (245 aa). Positions 39, 41, 42, 43, 64, 68, and 93 each coordinate NADPH. Positions 39–43 match the GXSXG motif; it reads GGSSG. Ser-172 acts as the Proton donor in catalysis. The Proton acceptor role is filled by Tyr-186. Residues Tyr-186 and Lys-190 each coordinate NADP(+). Lys-190 acts as the Lowers pKa of active site Tyr in catalysis. A helical membrane pass occupies residues 271–291; that stretch reads GYMLSSLTCGMAPVTSITEGL. Over 292–293 the chain is Lumenal; the sequence is QQ. Residues 294–314 traverse the membrane as a helical segment; that stretch reads VVTMGLFRTIALFYLGSFDNI. Topologically, residues 315–332 are cytoplasmic; it reads VRRCMVQKAKPEVVDKTA.

Belongs to the short-chain dehydrogenases/reductases (SDR) family.

The protein resides in the endoplasmic reticulum membrane. It carries out the reaction sphinganine + NADP(+) = 3-oxosphinganine + NADPH + H(+). It participates in lipid metabolism; sphingolipid metabolism. Catalyzes the reduction of 3'-oxosphinganine (3-ketodihydrosphingosine/KDS) to sphinganine (dihydrosphingosine/DHS), the second step of de novo sphingolipid biosynthesis. The chain is 3-ketodihydrosphingosine reductase (Kdsr) from Mus musculus (Mouse).